The following is a 578-amino-acid chain: Serine/threonine-protein kinase D6PKL3 (578 aa).

Residues 1-24 are compositionally biased toward low complexity; the sequence is MDSSSSVVYVGSSSKSRNFQSKSK. The interval 1–64 is disordered; the sequence is MDSSSSVVYV…EVIESSVSSV (64 aa). The segment covering 25–34 has biased composition (polar residues); it reads GSITSFSIDS. Over residues 53–64 the composition is skewed to low complexity; the sequence is SPEVIESSVSSV. The Protein kinase domain maps to 182-516; the sequence is FKLIKKLGGG…ATEIKQHPFF (335 aa). ATP contacts are provided by residues 188–196 and lysine 211; that span reads LGGGDIGNV. Catalysis depends on aspartate 307, which acts as the Proton acceptor. Residues 325 to 426 form an activation loop region; sequence DFDLSLRCAV…VGTHEYLAPE (102 aa). The PIF motif lies at 575–578; sequence IDFF.

It belongs to the protein kinase superfamily. AGC Ser/Thr protein kinase family. As to expression, expressed predominantly in root tissue with lower levels found in leaf, stem, seed and flower.

Its subcellular location is the cell membrane. The enzyme catalyses L-seryl-[protein] + ATP = O-phospho-L-seryl-[protein] + ADP + H(+). The catalysed reaction is L-threonyl-[protein] + ATP = O-phospho-L-threonyl-[protein] + ADP + H(+). Protein kinase that regulates the auxin transport activity of PIN auxin efflux facilitators by direct phosphorylation. D6PK-mediated PIN phosphorylation promotes auxin transport in the hypocotyl and this is a prerequisite for PHOT1-dependent hypocotyl bending. The protein is Serine/threonine-protein kinase D6PKL3 (D6PKL3) of Arabidopsis thaliana (Mouse-ear cress).